The chain runs to 214 residues: ATP-dependent Clp protease proteolytic subunit 3 (214 aa).

The active-site Nucleophile is S106. Residue H131 is part of the active site.

Belongs to the peptidase S14 family. As to quaternary structure, fourteen ClpP subunits assemble into 2 heptameric rings which stack back to back to give a disk-like structure with a central cavity, resembling the structure of eukaryotic proteasomes.

It localises to the cytoplasm. The catalysed reaction is Hydrolysis of proteins to small peptides in the presence of ATP and magnesium. alpha-casein is the usual test substrate. In the absence of ATP, only oligopeptides shorter than five residues are hydrolyzed (such as succinyl-Leu-Tyr-|-NHMec, and Leu-Tyr-Leu-|-Tyr-Trp, in which cleavage of the -Tyr-|-Leu- and -Tyr-|-Trp bonds also occurs).. Cleaves peptides in various proteins in a process that requires ATP hydrolysis. Has a chymotrypsin-like activity. Plays a major role in the degradation of misfolded proteins. The chain is ATP-dependent Clp protease proteolytic subunit 3 from Trichormus variabilis (strain ATCC 29413 / PCC 7937) (Anabaena variabilis).